The chain runs to 187 residues: Biogenesis of lysosome-related organelles complex 1 subunit 5 (187 aa).

A disordered region spans residues 1 to 26 (MSGGGTETPVGCEAAPGGGSKKRDSL). N-acetylserine is present on Ser-2. Residues 154 to 186 (NKRAEVDEEHRKAMERLKEQYAEMEKDLAKFST) adopt a coiled-coil conformation.

Belongs to the BLOC1S5 family. In terms of assembly, interacts with BLOC1S4, DTNBP1/BLOC1S7 and PI4K2A. Component of the biogenesis of lysosome-related organelles complex 1 (BLOC-1) composed of BLOC1S1, BLOC1S2, BLOC1S3, BLOC1S4, BLOC1S5, BLOC1S6, DTNBP1/BLOC1S7 and SNAPIN/BLOC1S8. Octamer composed of one copy each BLOC1S1, BLOC1S2, BLOC1S3, BLOC1S4, BLOC1S5, BLOC1S6, DTNBP1/BLOC1S7 and SNAPIN/BLOC1S8. The BLOC-1 complex associates with the AP-3 protein complex and membrane protein cargos. Interacts with BLOC1S6.

In terms of biological role, component of the BLOC-1 complex, a complex that is required for normal biogenesis of lysosome-related organelles (LRO), such as platelet dense granules and melanosomes. In concert with the AP-3 complex, the BLOC-1 complex is required to target membrane protein cargos into vesicles assembled at cell bodies for delivery into neurites and nerve terminals. The BLOC-1 complex, in association with SNARE proteins, is also proposed to be involved in neurite extension. Plays a role in intracellular vesicle trafficking. This Homo sapiens (Human) protein is Biogenesis of lysosome-related organelles complex 1 subunit 5.